A 79-amino-acid polypeptide reads, in one-letter code: Sulfur carrier protein TusA (79 aa).

Catalysis depends on C16, which acts as the Cysteine persulfide intermediate.

Belongs to the sulfur carrier protein TusA family.

It localises to the cytoplasm. Sulfur carrier protein which probably makes part of a sulfur-relay system. The polypeptide is Sulfur carrier protein TusA (Pseudomonas aeruginosa (strain LESB58)).